Here is a 206-residue protein sequence, read N- to C-terminus: Probable N-acetyltransferase 14 (206 aa).

The region spanning 9–206 (LSVREMREEE…TIVQEFRKDI (198 aa)) is the N-acetyltransferase domain. 2 helical membrane passes run 37 to 57 (LILY…ASSG) and 60 to 80 (FILN…IVGL).

Belongs to the camello family.

Its subcellular location is the membrane. Functionally, probable acetyltransferase. In Xenopus tropicalis (Western clawed frog), this protein is Probable N-acetyltransferase 14 (nat14).